The following is a 116-amino-acid chain: Ferredoxin-thioredoxin reductase, catalytic chain (116 aa).

Cysteine 57 is a [4Fe-4S] cluster binding site. Cysteine 59 (nucleophile) is an active-site residue. An intrachain disulfide couples cysteine 59 to cysteine 89. [4Fe-4S] cluster is bound by residues cysteine 76, cysteine 78, and cysteine 87.

It belongs to the ferredoxin thioredoxin reductase beta subunit family. Heterodimer of subunit A (variable subunit) and subunit B (catalytic subunit). Heterodimeric FTR forms a complex with ferredoxin and thioredoxin. [4Fe-4S] cluster is required as a cofactor.

Its subcellular location is the plastid. It localises to the chloroplast. The enzyme catalyses [thioredoxin]-disulfide + 2 reduced [2Fe-2S]-[ferredoxin] + 2 H(+) = [thioredoxin]-dithiol + 2 oxidized [2Fe-2S]-[ferredoxin]. Functionally, catalytic subunit of the ferredoxin-thioredoxin reductase (FTR), which catalyzes the two-electron reduction of thioredoxins by the electrons provided by reduced ferredoxin. This chain is Ferredoxin-thioredoxin reductase, catalytic chain (ftrB), found in Pyropia yezoensis (Susabi-nori).